A 550-amino-acid chain; its full sequence is Tyrosine-protein phosphatase 1 (550 aa).

One can recognise a Tyrosine-protein phosphatase domain in the interval 260–539 (LYQKFLRLQS…KYVYDLIDSL (280 aa)). Ser-318 and Ser-320 each carry phosphoserine. Cys-470 serves as the catalytic Phosphocysteine intermediate.

Belongs to the protein-tyrosine phosphatase family. Non-receptor class subfamily.

The protein localises to the cytoplasm. It catalyses the reaction O-phospho-L-tyrosyl-[protein] + H2O = L-tyrosyl-[protein] + phosphate. Functionally, plays a role in inhibiting the onset of mitosis. Dephosphorylates sty1/spc1 and wis1/spc2/sty2. The protein is Tyrosine-protein phosphatase 1 (pyp1) of Schizosaccharomyces pombe (strain 972 / ATCC 24843) (Fission yeast).